The following is a 104-amino-acid chain: Large ribosomal subunit protein uL23 (104 aa).

It belongs to the universal ribosomal protein uL23 family. In terms of assembly, part of the 50S ribosomal subunit. Contacts protein L29, and trigger factor when it is bound to the ribosome.

In terms of biological role, one of the early assembly proteins it binds 23S rRNA. One of the proteins that surrounds the polypeptide exit tunnel on the outside of the ribosome. Forms the main docking site for trigger factor binding to the ribosome. This Nostoc sp. (strain PCC 7120 / SAG 25.82 / UTEX 2576) protein is Large ribosomal subunit protein uL23.